The primary structure comprises 525 residues: GMP synthase [glutamine-hydrolyzing] (525 aa).

In terms of domain architecture, Glutamine amidotransferase type-1 spans 9–202 (SILIIDFGSQ…VHKIVGLKSD (194 aa)). Cys-86 serves as the catalytic Nucleophile. Catalysis depends on residues His-176 and Glu-178. The 198-residue stretch at 203–400 (WTMAAYRAEM…LGLPESFIGR (198 aa)) folds into the GMPS ATP-PPase domain. An ATP-binding site is contributed by 230–236 (SGGVDSS).

As to quaternary structure, homodimer.

It catalyses the reaction XMP + L-glutamine + ATP + H2O = GMP + L-glutamate + AMP + diphosphate + 2 H(+). Its pathway is purine metabolism; GMP biosynthesis; GMP from XMP (L-Gln route): step 1/1. Its function is as follows. Catalyzes the synthesis of GMP from XMP. The protein is GMP synthase [glutamine-hydrolyzing] of Agrobacterium fabrum (strain C58 / ATCC 33970) (Agrobacterium tumefaciens (strain C58)).